Consider the following 208-residue polypeptide: Thymidylate kinase (208 aa).

10-17 lines the ATP pocket; it reads GLEGAGKS.

The protein belongs to the thymidylate kinase family.

The catalysed reaction is dTMP + ATP = dTDP + ADP. Its function is as follows. Phosphorylation of dTMP to form dTDP in both de novo and salvage pathways of dTTP synthesis. The chain is Thymidylate kinase from Glaesserella parasuis serovar 5 (strain SH0165) (Haemophilus parasuis).